A 119-amino-acid polypeptide reads, in one-letter code: Large ribosomal subunit protein bL20 (119 aa).

It belongs to the bacterial ribosomal protein bL20 family.

In terms of biological role, binds directly to 23S ribosomal RNA and is necessary for the in vitro assembly process of the 50S ribosomal subunit. It is not involved in the protein synthesizing functions of that subunit. The polypeptide is Large ribosomal subunit protein bL20 (Legionella pneumophila (strain Paris)).